The sequence spans 290 residues: Agroclavine dehydrogenase (290 aa).

Belongs to the fgaFS/easG family. As to quaternary structure, monomer.

The catalysed reaction is agroclavine + NADP(+) = didehydroagroclavine + NADPH + H(+). Its pathway is alkaloid biosynthesis; ergot alkaloid biosynthesis. Agroclavine dehydrogenase; part of the gene cluster that mediates the biosynthesis of fungal ergot alkaloid. DmaW catalyzes the first step of ergot alkaloid biosynthesis by condensing dimethylallyl diphosphate (DMAP) and tryptophan to form 4-dimethylallyl-L-tryptophan. The second step is catalyzed by the methyltransferase easF that methylates 4-dimethylallyl-L-tryptophan in the presence of S-adenosyl-L-methionine, resulting in the formation of 4-dimethylallyl-L-abrine. The catalase easC and the FAD-dependent oxidoreductase easE then transform 4-dimethylallyl-L-abrine to chanoclavine-I which is further oxidized by easD in the presence of NAD(+), resulting in the formation of chanoclavine-I aldehyde. Agroclavine dehydrogenase easG then mediates the conversion of chanoclavine-I aldehyde to agroclavine via a non-enzymatic adduct reaction: the substrate is an iminium intermediate that is formed spontaneously from chanoclavine-I aldehyde in the presence of glutathione. The presence of easA is not required to complete this reaction. Further conversion of agroclavine to paspalic acid is a two-step process involving oxidation of agroclavine to elymoclavine and of elymoclavine to paspalic acid, the second step being performed by the elymoclavine oxidase cloA. Paspalic acid is then further converted to D-lysergic acid. Ergopeptines are assembled from D-lysergic acid and three different amino acids by the D-lysergyl-peptide-synthetases composed each of a monomudular and a trimodular nonribosomal peptide synthetase subunit. LpsB and lpsC encode the monomodular subunits responsible for D-lysergic acid activation and incorporation into the ergopeptine backbone. LpsA1 and A2 subunits encode the trimodular nonribosomal peptide synthetase assembling the tripeptide portion of ergopeptines. LpsA1 is responsible for formation of the major ergopeptine, ergotamine, and lpsA2 for alpha-ergocryptine, the minor ergopeptine of the total alkaloid mixture elaborated by C.purpurea. D-lysergyl-tripeptides are assembled by the nonribosomal peptide synthetases and released as N-(D-lysergyl-aminoacyl)-lactams. Cyclolization of the D-lysergyl-tripeptides is performed by the Fe(2+)/2-ketoglutarate-dependent dioxygenase easH which introduces a hydroxyl group into N-(D-lysergyl-aminoacyl)-lactam at alpha-C of the aminoacyl residue followed by spontaneous condensation with the terminal lactam carbonyl group. The chain is Agroclavine dehydrogenase from Claviceps purpurea (Ergot fungus).